The sequence spans 192 residues: Probable nicotinate-nucleotide adenylyltransferase (192 aa).

It belongs to the NadD family.

It catalyses the reaction nicotinate beta-D-ribonucleotide + ATP + H(+) = deamido-NAD(+) + diphosphate. Its pathway is cofactor biosynthesis; NAD(+) biosynthesis; deamido-NAD(+) from nicotinate D-ribonucleotide: step 1/1. In terms of biological role, catalyzes the reversible adenylation of nicotinate mononucleotide (NaMN) to nicotinic acid adenine dinucleotide (NaAD). This chain is Probable nicotinate-nucleotide adenylyltransferase, found in Shouchella clausii (strain KSM-K16) (Alkalihalobacillus clausii).